The primary structure comprises 447 residues: N-succinylarginine dihydrolase (447 aa).

Substrate contacts are provided by residues 19–28 (AGLSFGNEAS), asparagine 110, and 137–138 (HR). Residue glutamate 174 is part of the active site. Arginine 214 contributes to the substrate binding site. Histidine 250 is a catalytic residue. Substrate contacts are provided by aspartate 252 and asparagine 365. The Nucleophile role is filled by cysteine 371.

It belongs to the succinylarginine dihydrolase family. As to quaternary structure, homodimer.

It catalyses the reaction N(2)-succinyl-L-arginine + 2 H2O + 2 H(+) = N(2)-succinyl-L-ornithine + 2 NH4(+) + CO2. It participates in amino-acid degradation; L-arginine degradation via AST pathway; L-glutamate and succinate from L-arginine: step 2/5. Catalyzes the hydrolysis of N(2)-succinylarginine into N(2)-succinylornithine, ammonia and CO(2). The chain is N-succinylarginine dihydrolase from Acinetobacter baumannii (strain ATCC 17978 / DSM 105126 / CIP 53.77 / LMG 1025 / NCDC KC755 / 5377).